A 202-amino-acid chain; its full sequence is MFTIGLTGGIGSGKSAAAERFAELGVPVIDTDVIAHELTRPGSRALDVIRASFGEAVIAADGSLDRPVLRRRVFVDPAARRQLEAILHPLILHEVKARLASLSGPYAVAVIPLLVETGAYDAPVDRIAVVDCPEELQIARTIARSGLTPDEVGAILAAQAARPARLAVADDVIVNTGSLAALRDQVDALHQRYLTLAANRLP.

The 198-residue stretch at 3 to 200 folds into the DPCK domain; it reads TIGLTGGIGS…QRYLTLAANR (198 aa). Position 11–16 (11–16) interacts with ATP; it reads GSGKSA.

This sequence belongs to the CoaE family.

It localises to the cytoplasm. The enzyme catalyses 3'-dephospho-CoA + ATP = ADP + CoA + H(+). It functions in the pathway cofactor biosynthesis; coenzyme A biosynthesis; CoA from (R)-pantothenate: step 5/5. In terms of biological role, catalyzes the phosphorylation of the 3'-hydroxyl group of dephosphocoenzyme A to form coenzyme A. The protein is Dephospho-CoA kinase of Thiobacillus denitrificans (strain ATCC 25259 / T1).